The sequence spans 88 residues: Small ribosomal subunit protein bS20 (88 aa).

It belongs to the bacterial ribosomal protein bS20 family.

In terms of biological role, binds directly to 16S ribosomal RNA. The protein is Small ribosomal subunit protein bS20 of Syntrophomonas wolfei subsp. wolfei (strain DSM 2245B / Goettingen).